The sequence spans 266 residues: Aspartate/glutamate leucyltransferase (266 aa).

This sequence belongs to the R-transferase family. Bpt subfamily.

Its subcellular location is the cytoplasm. It catalyses the reaction N-terminal L-glutamyl-[protein] + L-leucyl-tRNA(Leu) = N-terminal L-leucyl-L-glutamyl-[protein] + tRNA(Leu) + H(+). The catalysed reaction is N-terminal L-aspartyl-[protein] + L-leucyl-tRNA(Leu) = N-terminal L-leucyl-L-aspartyl-[protein] + tRNA(Leu) + H(+). In terms of biological role, functions in the N-end rule pathway of protein degradation where it conjugates Leu from its aminoacyl-tRNA to the N-termini of proteins containing an N-terminal aspartate or glutamate. This is Aspartate/glutamate leucyltransferase from Rhizorhabdus wittichii (strain DSM 6014 / CCUG 31198 / JCM 15750 / NBRC 105917 / EY 4224 / RW1) (Sphingomonas wittichii).